A 332-amino-acid polypeptide reads, in one-letter code: Anthranilate phosphoribosyltransferase (332 aa).

5-phospho-alpha-D-ribose 1-diphosphate contacts are provided by residues G79, 82–83, T87, 89–92, 107–115, and S119; these read GD, NIST, and KHGNRGVSS. Residue G79 participates in anthranilate binding. S91 contacts Mg(2+). N110 lines the anthranilate pocket. Anthranilate is bound at residue R165. Mg(2+)-binding residues include D223 and E224.

The protein belongs to the anthranilate phosphoribosyltransferase family. Homodimer. Requires Mg(2+) as cofactor.

The enzyme catalyses N-(5-phospho-beta-D-ribosyl)anthranilate + diphosphate = 5-phospho-alpha-D-ribose 1-diphosphate + anthranilate. It participates in amino-acid biosynthesis; L-tryptophan biosynthesis; L-tryptophan from chorismate: step 2/5. In terms of biological role, catalyzes the transfer of the phosphoribosyl group of 5-phosphorylribose-1-pyrophosphate (PRPP) to anthranilate to yield N-(5'-phosphoribosyl)-anthranilate (PRA). The protein is Anthranilate phosphoribosyltransferase of Vibrio cholerae serotype O1 (strain ATCC 39541 / Classical Ogawa 395 / O395).